The sequence spans 330 residues: L-asparaginase (330 aa).

One can recognise an Asparaginase/glutaminase domain in the interval 4–330 (PQVTILATGG…EAIQKIFSTY (327 aa)). The O-isoaspartyl threonine intermediate role is filled by Thr14. 93-94 (TD) lines the substrate pocket.

Belongs to the asparaginase 1 family. Homotetramer.

The protein localises to the cytoplasm. The enzyme catalyses L-asparagine + H2O = L-aspartate + NH4(+). The protein is L-asparaginase (ansA) of Wolinella succinogenes (strain ATCC 29543 / DSM 1740 / CCUG 13145 / JCM 31913 / LMG 7466 / NCTC 11488 / FDC 602W) (Vibrio succinogenes).